We begin with the raw amino-acid sequence, 398 residues long: Succinate--CoA ligase [ADP-forming] subunit beta (398 aa).

An ATP-grasp domain is found at 9–253; the sequence is KEILASYGVR…IREENPIEVE (245 aa). ATP is bound by residues Lys50, 57–59, Val106, and Glu116; that span reads GRG. Mg(2+) contacts are provided by Asn208 and Asp222. Substrate-binding positions include Asn273 and 330-332; that span reads GIV.

It belongs to the succinate/malate CoA ligase beta subunit family. In terms of assembly, heterotetramer of two alpha and two beta subunits. It depends on Mg(2+) as a cofactor.

It carries out the reaction succinate + ATP + CoA = succinyl-CoA + ADP + phosphate. It catalyses the reaction GTP + succinate + CoA = succinyl-CoA + GDP + phosphate. Its pathway is carbohydrate metabolism; tricarboxylic acid cycle; succinate from succinyl-CoA (ligase route): step 1/1. Functionally, succinyl-CoA synthetase functions in the citric acid cycle (TCA), coupling the hydrolysis of succinyl-CoA to the synthesis of either ATP or GTP and thus represents the only step of substrate-level phosphorylation in the TCA. The beta subunit provides nucleotide specificity of the enzyme and binds the substrate succinate, while the binding sites for coenzyme A and phosphate are found in the alpha subunit. This chain is Succinate--CoA ligase [ADP-forming] subunit beta, found in Flavobacterium psychrophilum (strain ATCC 49511 / DSM 21280 / CIP 103535 / JIP02/86).